Consider the following 193-residue polypeptide: MSFVPYVIEQNSRGERSYDIYSRLLKDRIIFLGEEVTDVSANLVVAQMLFLEAEDPSKDIHFYINSPGGSVSAGFAIYDTMQYIKCDVSTICIGMAASMGAFLLSGGAKGKRLALPNAEIMIHQPSGGARGQETEIRIVAENILKTRNKLNEILAANTGKSVEEISRDTERDNYMTAQEAVAYGLIDSVVEKR.

S98 serves as the catalytic Nucleophile. The active site involves H123.

The protein belongs to the peptidase S14 family. As to quaternary structure, fourteen ClpP subunits assemble into 2 heptameric rings which stack back to back to give a disk-like structure with a central cavity, resembling the structure of eukaryotic proteasomes.

It localises to the cytoplasm. The enzyme catalyses Hydrolysis of proteins to small peptides in the presence of ATP and magnesium. alpha-casein is the usual test substrate. In the absence of ATP, only oligopeptides shorter than five residues are hydrolyzed (such as succinyl-Leu-Tyr-|-NHMec, and Leu-Tyr-Leu-|-Tyr-Trp, in which cleavage of the -Tyr-|-Leu- and -Tyr-|-Trp bonds also occurs).. In terms of biological role, cleaves peptides in various proteins in a process that requires ATP hydrolysis. Has a chymotrypsin-like activity. Plays a major role in the degradation of misfolded proteins. The chain is ATP-dependent Clp protease proteolytic subunit from Lachnospira eligens (strain ATCC 27750 / DSM 3376 / VPI C15-48 / C15-B4) (Eubacterium eligens).